Consider the following 97-residue polypeptide: Putative membrane protein insertion efficiency factor (97 aa).

Positions 72 to 97 (VPGAEPDQEQHQCTPLCNHHSEDHSQ) are disordered.

It belongs to the UPF0161 family.

It is found in the cell inner membrane. Could be involved in insertion of integral membrane proteins into the membrane. The polypeptide is Putative membrane protein insertion efficiency factor (Alcanivorax borkumensis (strain ATCC 700651 / DSM 11573 / NCIMB 13689 / SK2)).